The primary structure comprises 653 residues: MPENKNDKENKNDKENKNTKEEKKKVKFSNIIWVYIIFAVFFIGALISLNWENNPIISYSEMLSLINDGQVESMKINQNGNVEILSKDGTTYESFSPALVIDKQYVNSLIQKGIKVEYVESVGTKWWFGLLINIIPIVVMVLFFFWLYRSASAGARSSMNFGKSGAKKYEPIGEKVTFKDVAGIDEVLDEIEDIVKFLKNPQEFQELGARMPKGTLLVGPPGTGKTLTARAIAGEADVPFYYASGSDFVELFVGVGASRVRDLFKTAKENAPAIIFIDELDAVGRQRGAGLGGGNDEREQTLNALLVELDGFDTSTGVVVMAATNRPDVLDKALLRPGRFDKKIMVGPPDVKGREEILKIHTRKKKIAPDVDLKLLAKRTPGFVGADLENLVNEAALIASRKKKNQVEMSDFEEAIDRVLTGPSKKYRIISDKEKKILSYHELGHAVLAYLLPNTDPVYKITIIPRGAGSLGSTLQIPEKDKYLIKKSEILDRIVVALGGRASEKLVFNFATTGAKDDLRKATDYAKSMIYRLGMSKRMGPVYWEGEEEEIFLGSELTKQRNYSEETAKELDVEVKKIINSMYDKALELLKQNRERLDLLASYIFKNETIYGEEFKKLMSKDLEELKEYIGGEKEINEFLKIDVVNHVNYQPV.

The disordered stretch occupies residues 1-20 (MPENKNDKENKNDKENKNTK). Residues 1 to 30 (MPENKNDKENKNDKENKNTKEEKKKVKFSN) lie on the Cytoplasmic side of the membrane. A helical membrane pass occupies residues 31-51 (IIWVYIIFAVFFIGALISLNW). Topologically, residues 52 to 126 (ENNPIISYSE…EYVESVGTKW (75 aa)) are periplasmic. Residues 127-147 (WFGLLINIIPIVVMVLFFFWL) traverse the membrane as a helical segment. Residues 148-653 (YRSASAGARS…VVNHVNYQPV (506 aa)) lie on the Cytoplasmic side of the membrane. 219 to 226 (GPPGTGKT) is an ATP binding site. His-441 serves as a coordination point for Zn(2+). The active site involves Glu-442. Zn(2+) is bound by residues His-445 and Asp-518.

It in the central section; belongs to the AAA ATPase family. In the C-terminal section; belongs to the peptidase M41 family. As to quaternary structure, homohexamer. Requires Zn(2+) as cofactor.

It is found in the cell inner membrane. Functionally, acts as a processive, ATP-dependent zinc metallopeptidase for both cytoplasmic and membrane proteins. Plays a role in the quality control of integral membrane proteins. This is ATP-dependent zinc metalloprotease FtsH 1 from Petrotoga mobilis (strain DSM 10674 / SJ95).